The sequence spans 306 residues: Olfactory receptor 8G17 (306 aa).

Residues 1–28 (MEKGNQSTVNKFFLSGLTEQPELQLPLF) lie on the Extracellular side of the membrane. A glycan (N-linked (GlcNAc...) asparagine) is linked at asparagine 5. The helical transmembrane segment at 29 to 49 (LLFLGIYLLTVLGNLGMIILI) threads the bilayer. The Cytoplasmic portion of the chain corresponds to 50–56 (LLSSYLH). The helical transmembrane segment at 57–77 (TPMYFFLSSLSFIDFCQSTVI) threads the bilayer. Residues 78-97 (TPKMLVKFVREKNEISYPEC) are Extracellular-facing. A helical transmembrane segment spans residues 98–118 (ITQLCFFVIFAVSESYMLAAM). At 119-143 (AYDRYVAICSPLLYSSIMSQHKCLS) the chain is on the cytoplasmic side. The chain crosses the membrane as a helical span at residues 144–164 (LVLGVYILGIVCASAHVGCIF). Over 165 to 196 (RIDFCKSDLINHYFCDLISILNLSCSNIFVND) the chain is Extracellular. A helical membrane pass occupies residues 197 to 217 (LVILIFSLINTIFPTLTILSS). Over 218–236 (YAFIIISILRIKSTEGRSK) the chain is Cytoplasmic. The chain crosses the membrane as a helical span at residues 237 to 257 (AFSTCSSHISAVAIFYISAGF). Residues 258–271 (TYLNPSSSHSMDEG) lie on the Extracellular side of the membrane. Residues 272–292 (KVSSIFYTIIVPMLNPLIYSL) form a helical membrane-spanning segment. The Cytoplasmic portion of the chain corresponds to 293–306 (RNKDVKIALKKMIE).

This sequence belongs to the G-protein coupled receptor 1 family.

The protein resides in the cell membrane. Odorant receptor. This chain is Olfactory receptor 8G17, found in Mus musculus (Mouse).